The sequence spans 468 residues: Ubiquitin carboxyl-terminal hydrolase 17-like protein B (468 aa).

A disordered region spans residues 1–20 (MVVALSFPEADPAMSPPSAP). A USP domain is found at 51–348 (CGLQNTGNSC…NAYVLFYVQQ (298 aa)). Cys-60 functions as the Nucleophile in the catalytic mechanism. The active-site Proton acceptor is His-307. Positions 374-449 (KKSGEKKHNK…GGQNLRNTEG (76 aa)) are disordered. Basic and acidic residues predominate over residues 394–403 (CENREKRSSK). A compositionally biased stretch (polar residues) spans 422 to 434 (GQKQENTKLTPQE).

The protein belongs to the peptidase C19 family. USP17 subfamily. Ubiquitinated. In terms of tissue distribution, detected in brain, heart, liver, lung, kidney, ovary and spleen.

The catalysed reaction is Thiol-dependent hydrolysis of ester, thioester, amide, peptide and isopeptide bonds formed by the C-terminal Gly of ubiquitin (a 76-residue protein attached to proteins as an intracellular targeting signal).. Inhibited by ubiquitin aldehyde. In terms of biological role, deubiquitinating enzyme that removes conjugated ubiquitin from specific proteins to regulate different cellular processes. This chain is Ubiquitin carboxyl-terminal hydrolase 17-like protein B, found in Mus musculus (Mouse).